We begin with the raw amino-acid sequence, 288 residues long: Pantothenate synthetase (288 aa).

ATP is bound at residue 27–34 (MGALHEGH). His34 (proton donor) is an active-site residue. Residues Gln58 and Gln150 each contribute to the (R)-pantoate site. Residue Gln58 participates in beta-alanine binding. ATP is bound by residues Leu173 and 181–184 (YSSR).

This sequence belongs to the pantothenate synthetase family. Homodimer.

The protein localises to the cytoplasm. The enzyme catalyses (R)-pantoate + beta-alanine + ATP = (R)-pantothenate + AMP + diphosphate + H(+). The protein operates within cofactor biosynthesis; (R)-pantothenate biosynthesis; (R)-pantothenate from (R)-pantoate and beta-alanine: step 1/1. Functionally, catalyzes the condensation of pantoate with beta-alanine in an ATP-dependent reaction via a pantoyl-adenylate intermediate. The protein is Pantothenate synthetase of Tropheryma whipplei (strain TW08/27) (Whipple's bacillus).